A 660-amino-acid polypeptide reads, in one-letter code: Bifunctional polymyxin resistance protein ArnA (660 aa).

The interval 1–304 (MKAVIFAYHD…TLGLVAGARL (304 aa)) is formyltransferase ArnAFT. His-104 acts as the Proton donor; for formyltransferase activity in catalysis. Residues Arg-114 and 136–140 (VKRAD) each bind (6R)-10-formyltetrahydrofolate. The interval 314 to 660 (RRIRVLILGV…RSVDIAERAS (347 aa)) is dehydrogenase ArnADH. Residues Asp-347 and 368-369 (DI) contribute to the NAD(+) site. UDP-alpha-D-glucuronate is bound by residues Ala-393, Tyr-398, and 432 to 433 (TS). The Proton acceptor; for decarboxylase activity role is filled by Glu-434. Residues Arg-460, Asn-492, 526-535 (KLIDGGQQKR), and Tyr-613 each bind UDP-alpha-D-glucuronate. Arg-619 acts as the Proton donor; for decarboxylase activity in catalysis.

It in the N-terminal section; belongs to the Fmt family. UDP-L-Ara4N formyltransferase subfamily. In the C-terminal section; belongs to the NAD(P)-dependent epimerase/dehydratase family. UDP-glucuronic acid decarboxylase subfamily. Homohexamer, formed by a dimer of trimers.

It catalyses the reaction UDP-alpha-D-glucuronate + NAD(+) = UDP-beta-L-threo-pentopyranos-4-ulose + CO2 + NADH. The catalysed reaction is UDP-4-amino-4-deoxy-beta-L-arabinose + (6R)-10-formyltetrahydrofolate = UDP-4-deoxy-4-formamido-beta-L-arabinose + (6S)-5,6,7,8-tetrahydrofolate + H(+). It participates in nucleotide-sugar biosynthesis; UDP-4-deoxy-4-formamido-beta-L-arabinose biosynthesis; UDP-4-deoxy-4-formamido-beta-L-arabinose from UDP-alpha-D-glucuronate: step 1/3. It functions in the pathway nucleotide-sugar biosynthesis; UDP-4-deoxy-4-formamido-beta-L-arabinose biosynthesis; UDP-4-deoxy-4-formamido-beta-L-arabinose from UDP-alpha-D-glucuronate: step 3/3. The protein operates within bacterial outer membrane biogenesis; lipopolysaccharide biosynthesis. Its function is as follows. Bifunctional enzyme that catalyzes the oxidative decarboxylation of UDP-glucuronic acid (UDP-GlcUA) to UDP-4-keto-arabinose (UDP-Ara4O) and the addition of a formyl group to UDP-4-amino-4-deoxy-L-arabinose (UDP-L-Ara4N) to form UDP-L-4-formamido-arabinose (UDP-L-Ara4FN). The modified arabinose is attached to lipid A and is required for resistance to polymyxin and cationic antimicrobial peptides. This chain is Bifunctional polymyxin resistance protein ArnA (arnA), found in Salmonella typhimurium (strain LT2 / SGSC1412 / ATCC 700720).